The chain runs to 192 residues: Molybdenum cofactor cytidylyltransferase (192 aa).

Aspartate 101 is a Mg(2+) binding site.

As to quaternary structure, monomer. Interacts with the Moco-binding chaperone PaoD. The cofactor is Mg(2+). Mn(2+) is required as a cofactor.

It carries out the reaction Mo-molybdopterin + CTP + H(+) = Mo-molybdopterin cytosine dinucleotide + diphosphate. Transfers a CMP moiety from CTP to Mo-molybdopterin (Mo-MPT) cofactor (Moco or molybdenum cofactor) to form Mo-molybdopterin cytosine dinucleotide (Mo-MCD) cofactor. Is specific for CTP; other nucleotides such as ATP and GTP cannot be utilized. Is also able to convert MPT to MCD in the absence of molybdate, however, with only one catalytic turnover. The polypeptide is Molybdenum cofactor cytidylyltransferase (mocA) (Escherichia coli (strain K12)).